The chain runs to 638 residues: 1-deoxy-D-xylulose-5-phosphate synthase (638 aa).

Thiamine diphosphate is bound by residues His71 and 112 to 114 (SHA). Asp144 provides a ligand contact to Mg(2+). Thiamine diphosphate contacts are provided by residues 145–146 (GA), Asn173, Tyr284, and Glu365. Asn173 is a binding site for Mg(2+).

This sequence belongs to the transketolase family. DXPS subfamily. In terms of assembly, homodimer. Mg(2+) serves as cofactor. Requires thiamine diphosphate as cofactor.

The catalysed reaction is D-glyceraldehyde 3-phosphate + pyruvate + H(+) = 1-deoxy-D-xylulose 5-phosphate + CO2. It functions in the pathway metabolic intermediate biosynthesis; 1-deoxy-D-xylulose 5-phosphate biosynthesis; 1-deoxy-D-xylulose 5-phosphate from D-glyceraldehyde 3-phosphate and pyruvate: step 1/1. Catalyzes the acyloin condensation reaction between C atoms 2 and 3 of pyruvate and glyceraldehyde 3-phosphate to yield 1-deoxy-D-xylulose-5-phosphate (DXP). The sequence is that of 1-deoxy-D-xylulose-5-phosphate synthase from Mycobacterium bovis (strain ATCC BAA-935 / AF2122/97).